The following is a 121-amino-acid chain: B-box domain protein 31 (121 aa).

The B box-type; atypical zinc finger occupies 26–72 (SVPVRCELCDGDASVFCEADSAFLCRKCDRWVHGANFLAWRHVRRVL). Positions 117–121 (PFVFL) match the PFVFL motif.

As to expression, highly expressed in shoot apical meristems and in vascular tissues of leaves. Also detected in petioles.

Functionally, developmental regulator acting by forming heterodimeric complexes, that sequester CO and CO-like (COL) proteins into non-functional complexes. Involved in the CO-mediated long-day flowering-promotion pathway. Engages CO and the transcriptional repressor TPL in a tripartite complex. The polypeptide is B-box domain protein 31 (Arabidopsis thaliana (Mouse-ear cress)).